The chain runs to 322 residues: tRNA-dihydrouridine(16) synthase (322 aa).

FMN contacts are provided by residues 7-9 and Gln-68; that span reads PME. The active-site Proton donor is the Cys-98. FMN-binding positions include Lys-139, 200–202, and 224–225; these read NGE and CR.

This sequence belongs to the Dus family. DusC subfamily. The cofactor is FMN.

The enzyme catalyses 5,6-dihydrouridine(16) in tRNA + NADP(+) = uridine(16) in tRNA + NADPH + H(+). It carries out the reaction 5,6-dihydrouridine(16) in tRNA + NAD(+) = uridine(16) in tRNA + NADH + H(+). Functionally, catalyzes the synthesis of 5,6-dihydrouridine (D), a modified base found in the D-loop of most tRNAs, via the reduction of the C5-C6 double bond in target uridines. Specifically modifies U16 in tRNAs. The protein is tRNA-dihydrouridine(16) synthase of Vibrio parahaemolyticus serotype O3:K6 (strain RIMD 2210633).